The chain runs to 354 residues: Uroporphyrinogen decarboxylase (354 aa).

Substrate-binding positions include 25–29, D75, Y152, T207, and H330; that span reads RQAGR.

This sequence belongs to the uroporphyrinogen decarboxylase family. In terms of assembly, homodimer.

The protein resides in the cytoplasm. It carries out the reaction uroporphyrinogen III + 4 H(+) = coproporphyrinogen III + 4 CO2. The protein operates within porphyrin-containing compound metabolism; protoporphyrin-IX biosynthesis; coproporphyrinogen-III from 5-aminolevulinate: step 4/4. Its function is as follows. Catalyzes the decarboxylation of four acetate groups of uroporphyrinogen-III to yield coproporphyrinogen-III. The sequence is that of Uroporphyrinogen decarboxylase from Xanthomonas oryzae pv. oryzae (strain MAFF 311018).